A 105-amino-acid polypeptide reads, in one-letter code: Putative membrane protein insertion efficiency factor (105 aa).

Belongs to the UPF0161 family.

It localises to the cell inner membrane. Could be involved in insertion of integral membrane proteins into the membrane. This chain is Putative membrane protein insertion efficiency factor, found in Nitratidesulfovibrio vulgaris (strain DSM 19637 / Miyazaki F) (Desulfovibrio vulgaris).